The sequence spans 496 residues: MGYFYLTAETWTLLVAFVTLLLVYAYWPYGTFKRLGISGPKPVPFFGTMLHYRRGFFTFDEECKKKYGKVWGIYDGRQPVLCVTDPEIIKAVLVKECLSFFTNRRNFRLNGPLYDAVSIAEDDQWKRIRSVLSPSFTSGRLKEMFEIMKNHSANLIRSMKKKADKDEPLDLKEFFGSYSMDVVTSTAFSVDIDSLNNPSDPFVTNIKKMLKFDFLNPLFLAVAFFPFLGPILEKFELSFFPKSVTDFFYASLEKIKSNREASQQKSRVDFLQLMIDSQKNSGAQQDKSLTDHEILSQSMIFIFAGYETSSSSLTFLAYNLATNPEVMKKLQEEIDATFPNKAPVHYQPLMEMEYLDCVINESLRLFPIAARLERVAKAAVEINGVVIPKDMVVMIPTWPLHRDPEIWPEPEAFKPERFSKKNKDNIDPYIYMPFGSGPRNCIGMRFALVLIKLAVVEILQQYSFSVCKETEVPFEMDIQGLLAPKRPIQLKLVPRS.

C441 serves as a coordination point for heme.

This sequence belongs to the cytochrome P450 family. Requires heme as cofactor. Highly expressed in liver and intestine. Moderate expression in gill and spleen. Low expression in kidney, brain and heart.

The protein localises to the endoplasmic reticulum membrane. The protein resides in the microsome membrane. The catalysed reaction is an organic molecule + reduced [NADPH--hemoprotein reductase] + O2 = an alcohol + oxidized [NADPH--hemoprotein reductase] + H2O + H(+). Its function is as follows. Putative steroid 6-beta-hydroxylase. This chain is Cytochrome P450 3A30 (cyp3a30), found in Fundulus heteroclitus (Killifish).